Here is a 267-residue protein sequence, read N- to C-terminus: uncharacterized protein (267 aa).

The ABC transporter domain maps to 17-248 (LKVENLTKIF…PRDRTSIEFL (232 aa)). 53–60 (GPSGCGKT) lines the ATP pocket.

This sequence belongs to the ABC transporter superfamily.

This is an uncharacterized protein from Methanocaldococcus jannaschii (strain ATCC 43067 / DSM 2661 / JAL-1 / JCM 10045 / NBRC 100440) (Methanococcus jannaschii).